The following is a 344-amino-acid chain: N-acetyl-gamma-glutamyl-phosphate reductase (344 aa).

Residue C149 is part of the active site.

This sequence belongs to the NAGSA dehydrogenase family. Type 1 subfamily.

Its subcellular location is the cytoplasm. It carries out the reaction N-acetyl-L-glutamate 5-semialdehyde + phosphate + NADP(+) = N-acetyl-L-glutamyl 5-phosphate + NADPH + H(+). It functions in the pathway amino-acid biosynthesis; L-arginine biosynthesis; N(2)-acetyl-L-ornithine from L-glutamate: step 3/4. Its function is as follows. Catalyzes the NADPH-dependent reduction of N-acetyl-5-glutamyl phosphate to yield N-acetyl-L-glutamate 5-semialdehyde. The chain is N-acetyl-gamma-glutamyl-phosphate reductase from Shouchella clausii (strain KSM-K16) (Alkalihalobacillus clausii).